The primary structure comprises 317 residues: uncharacterized protein (317 aa).

The span at 1–11 (MASAGAERRPG) shows a compositional bias: basic and acidic residues. Residues 1–164 (MASAGAERRP…KAKKRKSLGA (164 aa)) form a disordered region. Residues 19–34 (GQGQLTEEPGSAQTSE) show a composition bias toward polar residues. 2 stretches are compositionally biased toward basic and acidic residues: residues 47–58 (HEARGTQSEDQR) and 71–92 (EGPK…ERGP). Basic residues-rich tracts occupy residues 100–110 (RPRHGPKRKPV) and 151–161 (KQHKKAKKRKS).

This is an uncharacterized protein from Homo sapiens (Human).